A 510-amino-acid polypeptide reads, in one-letter code: MFIEKFKVESPNVKYTEDEIHSVYNYETTELVHENKNGSYQWTVKPKTVQYEFKTDIHVPKLGVMLVGWGGNNGSTLTGGVIANREGISWATKDKVQQANYFGSLTQASSIRVGSFNGEEIYAPFKSLLPMVNPDDIVFGGWDISDMNLADAMARAKVFDFDLQKQLRPYMESMVPLPGIYDPDFIAANQDSRANNVIKGTKKEQVQQIIKDIREFKEKNKVDKVVVLWTANTERYSNIVVGLNDTMENLLAAVEKDESEISPSTLYALACIYENIPFINGSPQNTFVPGLVDLAIKRNSLIGGDDFKSGQTKMKSVLVDFLVGAGIKPTSIVSYNHLGNNDGMNLSAPQTFRSKEISKSNVVDDMVSSNGILYEPGEHPDHVVVIKYVPYVGDSKRAMDEYTSEIFMGGKNTIVLHNTCEDSLLAAPIILDLVLLAELSTRIQLKGEAEGKFHSFHPVATILSYLTKAPLVPPGTPVVNALSKQRAMLENILRACVGLAPENNMILEYK.

Residues Gly70, Gly71, Asn72, Asn73, Asp143, Ile180, Gln190, Arg193, Thr230, Ala231, Asn232, Thr233, Gly281, Ser282, Asp306, Ser309, Asn340, Asn341, Asp342, Lys355, Gly393, Asp394, Asp422, and Ser423 each coordinate NAD(+).

Belongs to the myo-inositol 1-phosphate synthase family. It depends on NAD(+) as a cofactor.

The protein localises to the cytoplasm. Its subcellular location is the cytosol. It is found in the nucleus. It carries out the reaction D-glucose 6-phosphate = 1D-myo-inositol 3-phosphate. It participates in polyol metabolism; myo-inositol biosynthesis; myo-inositol from D-glucose 6-phosphate: step 1/2. Key enzyme in myo-inositol biosynthesis pathway that catalyzes the conversion of glucose 6-phosphate to 1-myo-inositol 1-phosphate in a NAD-dependent manner. May play a role in oxidative stress resistance and influences ascorbate levels. The protein is Inositol-3-phosphate synthase 1 of Populus euphratica (Euphrates poplar).